A 240-amino-acid chain; its full sequence is Glutathione S-transferase U9 (240 aa).

Positions 7-86 (NKVILHGSFA…YIDETWSNGP (80 aa)) constitute a GST N-terminal domain. Residues 17-18 (SP), 43-44 (NK), 57-58 (KI), and 70-71 (ES) contribute to the glutathione site. In terms of domain architecture, GST C-terminal spans 92–226 (DPYRRSKVRF…EQILEILRAF (135 aa)). Position 161 is a phosphothreonine (Thr161).

Belongs to the GST superfamily. Tau family.

The protein resides in the cytoplasm. It localises to the cytosol. It carries out the reaction RX + glutathione = an S-substituted glutathione + a halide anion + H(+). May be involved in the conjugation of reduced glutathione to a wide number of exogenous and endogenous hydrophobic electrophiles and have a detoxification role against certain herbicides. The chain is Glutathione S-transferase U9 (GSTU9) from Arabidopsis thaliana (Mouse-ear cress).